Here is a 1156-residue protein sequence, read N- to C-terminus: Nitric oxide synthase, inducible (1156 aa).

The DINNN-motif; mediates interaction with SPSB1, SPSB2 and SPSB4 motif lies at 23-27 (DINNN). The disordered stretch occupies residues 27–84 (NVGKFYQPPSSPVTQDDPKRHSPGKHGNESPQPLTGTVKTSPESLSKLDAPPSACPRH). Polar residues predominate over residues 55-70 (ESPQPLTGTVKTSPES). Residues Cys110 and Cys115 each coordinate Zn(2+). (6R)-L-erythro-5,6,7,8-tetrahydrobiopterin is bound at residue Ser118. Cys200 provides a ligand contact to heme b. L-arginine-binding residues include Gln263, Trp372, Tyr373, and Glu377. (6R)-L-erythro-5,6,7,8-tetrahydrobiopterin contacts are provided by Arg381, Ile462, Trp463, and Phe476. Position 491 (Tyr491) interacts with heme b. Positions 515–535 (FKVLVKAVFFASVLMHKAMAS) are calmodulin-binding. One can recognise a Flavodoxin-like domain in the interval 539–677 (ATILFATETG…AFRSWAVQTF (139 aa)). Positions 545, 546, 547, 549, and 550 each coordinate FMN. Tyr575 carries the post-translational modification Phosphotyrosine. The FMN site is built by Ser591, Thr592, Ser628, Cys635, Glu661, and Gln665. The region spanning 730-970 (KHVFTMRLKS…VRSASGFQLP (241 aa)) is the FAD-binding FR-type domain. Position 750 (Arg750) interacts with NADP(+). FAD is bound by residues His772, Arg906, Tyr908, Ser909, Thr924, and Ala926. Thr929 contacts NADP(+). Residues Tyr930, Val943, Cys944, and Ser945 each contribute to the FAD site. Residues Thr984, Arg1017, Ser1046, Arg1047, Lys1053, Tyr1055, Gln1057, and Asp1090 each coordinate NADP(+).

This sequence belongs to the NOS family. As to quaternary structure, homodimer. Interacts with NHERF1. Interacts with GAPDH; induced by oxidatively-modified low-densitity lipoprotein (LDL(ox)). Interacts with S100A8 and S100A9 to form the iNOS-S100A8/9 transnitrosylase complex. Interacts with SPSB1, SPSB2 and SPSB4. Interacts with ELOC and CUL5 in the presence of SPSB1 or SPSB2 or SPSB4. Forms a complex with ASL, ASS1 and HSP90AA1; the complex regulates cell-autonomous L-arginine synthesis and citrulline recycling while channeling extracellular L-arginine to nitric oxide synthesis pathway. It depends on heme b as a cofactor. FAD serves as cofactor. FMN is required as a cofactor. Requires (6R)-L-erythro-5,6,7,8-tetrahydrobiopterin as cofactor. Post-translationally, polyubiquitinated; mediated by SPSB1, SPSB2 and SPSB4, leading to proteasomal degradation.

The protein resides in the cytoplasm. Its subcellular location is the cytosol. It catalyses the reaction 2 L-arginine + 3 NADPH + 4 O2 + H(+) = 2 L-citrulline + 2 nitric oxide + 3 NADP(+) + 4 H2O. Its activity is regulated as follows. Regulated by calcium/calmodulin. Functionally, produces nitric oxide (NO) which is a messenger molecule with diverse functions throughout the body. In macrophages, NO mediates tumoricidal and bactericidal actions. Also has nitrosylase activity and mediates cysteine S-nitrosylation of cytoplasmic target proteins such PTGS2/COX2. As component of the iNOS-S100A8/9 transnitrosylase complex involved in the selective inflammatory stimulus-dependent S-nitrosylation of GAPDH implicated in regulation of the GAIT complex activity and probably multiple targets including ANXA5, EZR, MSN and VIM. Involved in inflammation, enhances the synthesis of pro-inflammatory mediators such as IL6 and IL8. This is Nitric oxide synthase, inducible (NOS2) from Bos taurus (Bovine).